Here is a 207-residue protein sequence, read N- to C-terminus: MKFLFDLLPIVLFFVAFKVAEGQPDAAAAFASQHFGFLVSGGMVGPKEAPVLLATLVVIVATFAQIGWLLLRGRKVDTMLWVSLGLVTVLGGATVWFHNETFIKWKPSVLYWVMGTAFWLSHAVFRKNLLQTLMGGQLQLPPAVWRNLNFMWIAFFAFMGLANLYVAYSFPTDVWVNFKLFGGVGLMLLFTLAQGLYLSRHIKTEDE.

The next 6 helical transmembrane spans lie at 3 to 23 (FLFDLLPIVLFFVAFKVAEGQ), 51 to 71 (VLLATLVVIVATFAQIGWLLL), 78 to 98 (TMLWVSLGLVTVLGGATVWFH), 105 to 125 (WKPSVLYWVMGTAFWLSHAVF), 150 to 170 (FMWIAFFAFMGLANLYVAYSF), and 178 to 198 (FKLFGGVGLMLLFTLAQGLYL).

This sequence belongs to the YciB family.

The protein localises to the cell inner membrane. In terms of biological role, plays a role in cell envelope biogenesis, maintenance of cell envelope integrity and membrane homeostasis. This is Inner membrane-spanning protein YciB from Methylibium petroleiphilum (strain ATCC BAA-1232 / LMG 22953 / PM1).